Here is a 412-residue protein sequence, read N- to C-terminus: Intraflagellar transport protein che-13 (412 aa).

2 disordered regions span residues 1-21 and 162-193; these read MEEE…GSAI and PPKE…NFLD. Acidic residues predominate over residues 165-193; that stretch reads EEDEDTAVDEQDEDDDNDDIVEEPMNFLD. Positions 302-393 form a coiled coil; sequence QLASMMSKFR…VQIGVFEQSI (92 aa).

This sequence belongs to the IFT57 family. Component of the IFT complex B composed of at least che-2, che-13, dyf-1, dyf-3, dyf-6, dyf-11, dyf-13, ift-20, ift-74, ift-81, ifta-2, osm-1, osm-5 and osm-6.

The protein resides in the cytoplasm. It localises to the cytoskeleton. The protein localises to the cilium axoneme. Component of the intraflagellar transport (IFT) complex B required for transport of proteins in the motile cilium. May be required for ciliary entrance and transport of specific ciliary cargo proteins such as che-3 which are related to motility. Required for the formation of chemosensory cilia that detect chemosensory cues. The chain is Intraflagellar transport protein che-13 from Caenorhabditis elegans.